A 310-amino-acid chain; its full sequence is Zinc finger CCCH domain-containing protein 14 (310 aa).

The segment at 56 to 75 is disordered; it reads ESLSPSPPSSSSPPSRVDTT. A coiled-coil region spans residues 84 to 129; the sequence is KLILEYDELNEHYELCLNRLQSLMTELDSLRHENDSLRFENSDLLK. A compositionally biased stretch (basic and acidic residues) spans 155-167; the sequence is QISDSRSAKRNNQ. The segment at 155-174 is disordered; the sequence is QISDSRSAKRNNQERNSLPK. 2 consecutive C3H1-type zinc fingers follow at residues 232–260 and 270–298; these read MMKT…HGID and RYKT…HSLT.

Highly expressed in secondary cell wall-forming tissues and the xylem cells of roots. Expressed predominantly in inflorescence stems, flowers and siliques. Highly expressed in the basal portion of stems, where cells are undergoing secondary cell wall thickening.

Its function is as follows. Functions probably as a transcriptional factor that activates genes involved in secondary cell wall biosynthesis. May play a role in both transcriptional and post-transcriptional regulation. Binds to ssDNA, dsDNA, and ribohomopolymers in vitro. Maybe involved in post-transcriptional regulation of its target genes. Targets RNA of a polygalacturonase, a well-known cell wall modifying gene. Functions redudantly with C3H15 to regulate secondary cell wall formation. C3H14 and C3H15 have overlapping roles in the regulation of secondary cell wall formation and anther development. C3H14 may contribute more to secondary cell wall thickening while C3H15 could be more important in anther development. May regulate at both the transcriptional and post-transcriptional levels the expression of many genes involved in various biological processes, particularly those associated with cell wall metabolism and pollen development. In Arabidopsis thaliana (Mouse-ear cress), this protein is Zinc finger CCCH domain-containing protein 14.